A 295-amino-acid polypeptide reads, in one-letter code: MIKQYLQVTKPGIIFGNLISVIGGFLLASKGDIDYPLFLSTLLGVSLVVASGCVFNNYIDRDIDKIMERTKNRVLVKGLIDPKVSLIYASVLGIAGMLLLYVAANALAMMLAVIGFVIYVGVYSLYMKRKSVYGTLIGSLSGAAPPVIGYCAVTGQFDTGALILLLIFSLWQMPHSYAIAIFRFKDYQAANIPVLPVIKGISVTKNHITLYILAFMVATLMLTLSGYAGYKYLVVAAAVSVWWLGMALRGYKATNDSVWARKLFVFSIIAITSLSVMMSVDFNVHSSAVLLTYAG.

Transmembrane regions (helical) follow at residues 8-28 (VTKP…FLLA), 35-55 (YPLF…GCVF), 74-94 (VLVK…VLGI), 98-118 (LLLY…GFVI), 132-152 (VYGT…GYCA), 162-182 (LILL…IAIF), 208-228 (ITLY…SGYA), 233-253 (LVVA…GYKA), and 264-284 (FVFS…DFNV).

The protein belongs to the UbiA prenyltransferase family. Protoheme IX farnesyltransferase subfamily.

The protein localises to the cell inner membrane. It carries out the reaction heme b + (2E,6E)-farnesyl diphosphate + H2O = Fe(II)-heme o + diphosphate. It participates in porphyrin-containing compound metabolism; heme O biosynthesis; heme O from protoheme: step 1/1. Its function is as follows. Converts heme B (protoheme IX) to heme O by substitution of the vinyl group on carbon 2 of heme B porphyrin ring with a hydroxyethyl farnesyl side group. This is Protoheme IX farnesyltransferase from Yersinia pseudotuberculosis serotype O:1b (strain IP 31758).